The sequence spans 242 residues: Uridylate kinase (242 aa).

15 to 18 (KLSG) provides a ligand contact to ATP. Residue G57 coordinates UMP. ATP-binding residues include G58 and R62. UMP-binding positions include D78 and 139 to 146 (TGNPFFTT). ATP contacts are provided by T166, Y172, and D175.

This sequence belongs to the UMP kinase family. As to quaternary structure, homohexamer.

The protein localises to the cytoplasm. The enzyme catalyses UMP + ATP = UDP + ADP. Its pathway is pyrimidine metabolism; CTP biosynthesis via de novo pathway; UDP from UMP (UMPK route): step 1/1. Its activity is regulated as follows. Inhibited by UTP. In terms of biological role, catalyzes the reversible phosphorylation of UMP to UDP. The polypeptide is Uridylate kinase (Acinetobacter baumannii (strain ATCC 17978 / DSM 105126 / CIP 53.77 / LMG 1025 / NCDC KC755 / 5377)).